The sequence spans 131 residues: Small ribosomal subunit protein uS8 (131 aa).

This sequence belongs to the universal ribosomal protein uS8 family. As to quaternary structure, part of the 30S ribosomal subunit. Contacts proteins S5 and S12.

Functionally, one of the primary rRNA binding proteins, it binds directly to 16S rRNA central domain where it helps coordinate assembly of the platform of the 30S subunit. This chain is Small ribosomal subunit protein uS8, found in Wolbachia pipientis wMel.